We begin with the raw amino-acid sequence, 342 residues long: tRNA dimethylallyltransferase (342 aa).

39 to 46 contributes to the ATP binding site; that stretch reads GPTGSGKT. 41–46 contacts substrate; the sequence is TGSGKT. The tract at residues 64–67 is interaction with substrate tRNA; the sequence is DSMQ.

Belongs to the IPP transferase family. As to quaternary structure, monomer. It depends on Mg(2+) as a cofactor.

It catalyses the reaction adenosine(37) in tRNA + dimethylallyl diphosphate = N(6)-dimethylallyladenosine(37) in tRNA + diphosphate. Functionally, catalyzes the transfer of a dimethylallyl group onto the adenine at position 37 in tRNAs that read codons beginning with uridine, leading to the formation of N6-(dimethylallyl)adenosine (i(6)A). This is tRNA dimethylallyltransferase from Chlamydia pneumoniae (Chlamydophila pneumoniae).